Here is a 512-residue protein sequence, read N- to C-terminus: NAD(P)H-quinone oxidoreductase chain 4, chloroplastic (512 aa).

The next 14 helical transmembrane spans lie at 4–24, 34–54, 87–107, 111–131, 134–154, 167–187, 208–228, 242–262, 274–294, 308–328, 330–350, 374–396, 417–437, and 462–482; these read VPWLTAIVLFPVSAGLLIPLL, WYALGICLLDLILMTYVFGCY, IGLILLTGFVTTLATLAAWPV, PKLFYFLMLAMYSGQLGLFAS, ILLFFVMWELELIPVYLLLSM, FILYTAGGSIFLLAGLLTASL, GLEILIYLGFLIAYAVKLPAF, HYSTCMLLAGILLKMGGYGFI, TVFAPWLVALGAYQIVYAALV, SSVSHMGFVLVGAGSLSDLGL, GAMLQMISHGLIGASLFFLAG, MFAMFTTCAMASLALPGMSGFVS, IITLIEAVGIILTPIYLLSMV, and VFVLGSLLLPMIGIGIYPNFA.

It belongs to the complex I subunit 4 family.

The protein resides in the plastid. Its subcellular location is the chloroplast thylakoid membrane. It carries out the reaction a plastoquinone + NADH + (n+1) H(+)(in) = a plastoquinol + NAD(+) + n H(+)(out). The catalysed reaction is a plastoquinone + NADPH + (n+1) H(+)(in) = a plastoquinol + NADP(+) + n H(+)(out). In Zygnema circumcarinatum (Green alga), this protein is NAD(P)H-quinone oxidoreductase chain 4, chloroplastic.